We begin with the raw amino-acid sequence, 448 residues long: Exodeoxyribonuclease 7 large subunit (448 aa).

The protein belongs to the XseA family. Heterooligomer composed of large and small subunits.

It localises to the cytoplasm. The catalysed reaction is Exonucleolytic cleavage in either 5'- to 3'- or 3'- to 5'-direction to yield nucleoside 5'-phosphates.. In terms of biological role, bidirectionally degrades single-stranded DNA into large acid-insoluble oligonucleotides, which are then degraded further into small acid-soluble oligonucleotides. The chain is Exodeoxyribonuclease 7 large subunit from Photobacterium profundum (strain SS9).